The chain runs to 401 residues: Pyruvyl transferase 1 (401 aa).

The N-terminal stretch at 1–30 is a signal peptide; it reads MFANINIRKSVWLFLLAAVSCTLFIYGVTR. The segment at 38 to 64 is disordered; that stretch reads NPSSLTSPSSSTSVDKKKPLFTKSPRN. Over residues 39 to 50 the composition is skewed to low complexity; the sequence is PSSLTSPSSSTS.

The protein belongs to the polysaccharide pyruvyl transferase family.

Functionally, involved in cell wall biogenesis. Has a role in the addition of Gal-beta1,3 moieties to galactomannans and their subsequent pyruvylation. The polypeptide is Pyruvyl transferase 1 (pvg1) (Schizosaccharomyces pombe (strain 972 / ATCC 24843) (Fission yeast)).